The chain runs to 180 residues: MPHNVVLTGRPGIGKTTVCLKVRNVLEEEGYTVGGIYCPEIREGGRRIGFEIVDLTEGDRYLLAREGASGPRVGRYGVFVDNLERAAESIERAVKRTDVVIVDEVGPMELKSNAFVDAVRRAADAHTPAIFVVHERSRHPVVVDLREERPDVVRFRVTLSNRDELSDRILEHVLEWLEER.

ATP contacts are provided by residues 9–16 (GRPGIGKT) and 99–106 (VVIVDEVG).

It belongs to the THEP1 NTPase family.

The catalysed reaction is a ribonucleoside 5'-triphosphate + H2O = a ribonucleoside 5'-diphosphate + phosphate + H(+). Functionally, has nucleotide phosphatase activity towards ATP, GTP, CTP, TTP and UTP. May hydrolyze nucleoside diphosphates with lower efficiency. The sequence is that of Nucleoside-triphosphatase THEP1 from Methanopyrus kandleri (strain AV19 / DSM 6324 / JCM 9639 / NBRC 100938).